We begin with the raw amino-acid sequence, 447 residues long: Hydroxymethylglutaryl-CoA synthase (447 aa).

The active-site Proton donor/acceptor is Glu86. Catalysis depends on Cys118, which acts as the Acyl-thioester intermediate. (3S)-3-hydroxy-3-methylglutaryl-CoA-binding residues include Cys118, Asn156, Thr160, Ser210, His250, Lys259, Asn327, and Ser361. The active-site Proton donor/acceptor is the His250. Thr398 is modified (phosphothreonine).

Belongs to the thiolase-like superfamily. HMG-CoA synthase family.

It carries out the reaction acetoacetyl-CoA + acetyl-CoA + H2O = (3S)-3-hydroxy-3-methylglutaryl-CoA + CoA + H(+). It participates in metabolic intermediate biosynthesis; (R)-mevalonate biosynthesis; (R)-mevalonate from acetyl-CoA: step 2/3. Functionally, hydroxymethylglutaryl-CoA synthase; part of the first module of ergosterol biosynthesis pathway that includes the early steps of the pathway, conserved across all eukaryotes, and which results in the formation of mevalonate from acetyl-coenzyme A (acetyl-CoA). Hcs1 condenses acetyl-CoA with acetoacetyl-CoA to form hydroxymethylglutaryl-CoA (HMG-CoA). The first module starts with the action of the cytosolic acetyl-CoA acetyltransferase eg10 that catalyzes the formation of acetoacetyl-CoA. The hydroxymethylglutaryl-CoA synthases erg13 then condenses acetyl-CoA with acetoacetyl-CoA to form HMG-CoA. The rate-limiting step of the early module is the reduction to mevalonate by the 3-hydroxy-3-methylglutaryl-coenzyme A (HMG-CoA) reductases hcs1. This is Hydroxymethylglutaryl-CoA synthase from Schizosaccharomyces pombe (strain 972 / ATCC 24843) (Fission yeast).